Here is a 112-residue protein sequence, read N- to C-terminus: MKKIEAIIKPFKLDEVKDALVEIGIGGMTVTEVKGFGQQKGHTEIYRGTEYVIDFLPKVKIEVVVRDEDVEKVVETIVKTAQTGRVGDGKIFIIPVEDVIRIRTGERGEQAI.

At Y51 the chain carries O-UMP-tyrosine.

It belongs to the P(II) protein family. Homotrimer.

In nitrogen-limiting conditions, when the ratio of Gln to 2-ketoglutarate decreases, P-II is uridylylated to P-II-UMP. P-II-UMP allows the deadenylation of glutamine synthetase (GS), thus activating the enzyme. Conversely, in nitrogen excess P-II is deuridylated and promotes the adenylation of GS. P-II indirectly controls the transcription of the GS gene (glnA). P-II prevents NR-II-catalyzed conversion of NR-I to NR-I-phosphate, the transcriptional activator of glnA. When P-II is uridylylated to P-II-UMP, these events are reversed. The chain is Nitrogen regulatory protein P-II (glnB) from Aquifex aeolicus (strain VF5).